A 117-amino-acid chain; its full sequence is UPF0102 protein YE3728 (117 aa).

This sequence belongs to the UPF0102 family.

This Yersinia enterocolitica serotype O:8 / biotype 1B (strain NCTC 13174 / 8081) protein is UPF0102 protein YE3728.